A 326-amino-acid polypeptide reads, in one-letter code: Homeobox protein Hox-A1 (326 aa).

Residues 196 to 201 carry the Antp-type hexapeptide motif; it reads TFDWMK. The homeobox DNA-binding region spans 221 to 280; sequence PNTVRTNFTTKQLTELEKEFHFNKYLTRARRVEIAAALQLNETQVKIWFQNRRMKQKKRE. The tract at residues 273 to 326 is disordered; sequence RMKQKKREKEGLTSASPATPGSEANTEDTSDKCNSTSSTPSPSSSTSETINTSG. Positions 285-296 are enriched in polar residues; that stretch reads TSASPATPGSEA. The segment covering 306-326 has biased composition (low complexity); sequence NSTSSTPSPSSSTSETINTSG.

It belongs to the Antp homeobox family. Labial subfamily.

It is found in the nucleus. Its function is as follows. Sequence-specific transcription factor. Part of a developmental regulatory system that provides cells with specific positional identities on the anterior-posterior axis. Acts on the anterior body structures. Seems to act in the maintenance and/or generation of hindbrain segments. The protein is Homeobox protein Hox-A1 (HOXA1) of Heterodontus francisci (Horn shark).